We begin with the raw amino-acid sequence, 540 residues long: Probable ATP-dependent RNA helicase DDX28 (540 aa).

A Mitochondrial targeting signal motif is present at residues 3 to 18; that stretch reads LTRPVRLFSLVTRLLL. Positions 126–156 match the Q motif motif; it reads GSFADLGLEPRVLHALQEAAPEVVQPTTVQS. Residues 159 to 351 enclose the Helicase ATP-binding domain; the sequence is IPSLLRGRHV…NKVASPDAVT (193 aa). 172–179 contacts ATP; the sequence is AETGSGKT. Positions 180–191 match the Nuclear export signal motif; sequence LSYLLPLLQRLL. The DEAD signature appears at 286-289; sequence DEAD. Residues 377 to 536 enclose the Helicase C-terminal domain; the sequence is KVAELVHILK…GLASSVKEPL (160 aa). The short motif at 520 to 523 is the Nuclear localization signal element; that stretch reads RRRR.

The protein belongs to the DEAD box helicase family. In terms of assembly, monomer. Found in a complex with GRSF1, DHX30, FASTKD2 and FASTKD5. Associates with the 16S mitochondrial rRNA (16S mt-rRNA) and with the mitochondrial ribosome large subunit (39S). Expressed in all tissues tested, including brain, placenta, lung, liver, skeletal muscle, kidney, pancreas, leukocytes, colon, small intestine, ovary and prostate.

It is found in the nucleus. It localises to the mitochondrion. The protein localises to the mitochondrion matrix. Its subcellular location is the mitochondrion nucleoid. It carries out the reaction ATP + H2O = ADP + phosphate + H(+). Its function is as follows. Plays an essential role in facilitating the proper assembly of the mitochondrial large ribosomal subunit and its helicase activity is essential for this function. May be involved in RNA processing or transport. Has RNA and Mg(2+)-dependent ATPase activity. In Homo sapiens (Human), this protein is Probable ATP-dependent RNA helicase DDX28 (DDX28).